Consider the following 57-residue polypeptide: Protein YnaL (57 aa).

Residues 7–57 (LQIPVPEPIPGDPVPVPDPIPRPQPMPDPPPDEEPIKLSHRERRSARIRAC) are disordered. Positions 11 to 35 (VPEPIPGDPVPVPDPIPRPQPMPDP) are enriched in pro residues. The segment covering 46 to 57 (HRERRSARIRAC) has biased composition (basic residues).

The polypeptide is Protein YnaL (Escherichia coli (strain K12)).